Here is a 286-residue protein sequence, read N- to C-terminus: Bifunctional protein FolD (286 aa).

166-168 serves as a coordination point for NADP(+); sequence GAS.

Belongs to the tetrahydrofolate dehydrogenase/cyclohydrolase family. As to quaternary structure, homodimer.

The catalysed reaction is (6R)-5,10-methylene-5,6,7,8-tetrahydrofolate + NADP(+) = (6R)-5,10-methenyltetrahydrofolate + NADPH. It catalyses the reaction (6R)-5,10-methenyltetrahydrofolate + H2O = (6R)-10-formyltetrahydrofolate + H(+). The protein operates within one-carbon metabolism; tetrahydrofolate interconversion. Catalyzes the oxidation of 5,10-methylenetetrahydrofolate to 5,10-methenyltetrahydrofolate and then the hydrolysis of 5,10-methenyltetrahydrofolate to 10-formyltetrahydrofolate. This Idiomarina loihiensis (strain ATCC BAA-735 / DSM 15497 / L2-TR) protein is Bifunctional protein FolD.